The sequence spans 432 residues: MISAAQLLDELMGRDRNLAPDEKRSNVRWDHESVCKYYLCGFCPAELFTNTRSDLGPCEKIHDENLRKQYEKSSRFMKVGYERDFLRYLQSLLAEVERRIRRGHARLALSQNQQSSGAAGPTGKNEEKIQVLTDKIDVLLQQIEELGSEGKVEEAQGMMKLVEQLKEERELLRSTTSTIESFAAQEKQMEVCEVCGAFLIVGDAQSRVDDHLMGKQHMGYAKIKATVEELKEKLRKRTEEPDRDERLKKEKQEREEREKEREREREERERKRRREEEEREKERARDRERRKRSRSRSRHSSRTSDRRCSRSRDHKRSRSRDRRRSRSRDRRRSRSHDRSERKHRSRSRDRRRSKSRDRKSYKHRSKSRDREQDRKSKEKEKKGSDDKKSSVKSSSREKQSEDTNPESKESDTKNEVNGTSEDIKSEGDTQSN.

N-acetylmethionine is present on M1. Phosphoserine occurs at positions 3, 110, and 115. The stretch at 124-181 (KNEEKIQVLTDKIDVLLQQIEELGSEGKVEEAQGMMKLVEQLKEERELLRSTTSTIES) forms a coiled coil. K231 carries the N6-acetyllysine modification. Basic and acidic residues predominate over residues 234–287 (LRKRTEEPDRDERLKKEKQEREEREKEREREREERERKRRREEEEREKERARDR). The disordered stretch occupies residues 234-432 (LRKRTEEPDR…IKSEGDTQSN (199 aa)). The segment covering 288–301 (ERRKRSRSRSRHSS) has biased composition (basic residues). Residues 302 to 311 (RTSDRRCSRS) are compositionally biased toward basic and acidic residues. Residues 312–367 (RDHKRSRSRDRRRSRSRDRRRSRSHDRSERKHRSRSRDRRRSKSRDRKSYKHRSKS) are compositionally biased toward basic residues. Residues 368–414 (RDREQDRKSKEKEKKGSDDKKSSVKSSSREKQSEDTNPESKESDTKN) are compositionally biased toward basic and acidic residues. S420 is subject to Phosphoserine. A compositionally biased stretch (basic and acidic residues) spans 421-432 (EDIKSEGDTQSN). Residue K424 forms a Glycyl lysine isopeptide (Lys-Gly) (interchain with G-Cter in SUMO1); alternate linkage. K424 is covalently cross-linked (Glycyl lysine isopeptide (Lys-Gly) (interchain with G-Cter in SUMO2); alternate). A phosphoserine mark is found at S425 and S431.

The protein belongs to the Luc7 family. In terms of assembly, may interact with SFRS1 and form homodimers. Interacts with JMJD6. Interacts with RBM25. Interacts with RSRC1 (via Arg/Ser-rich domain). Interacts with RRP1B.

Its subcellular location is the nucleus speckle. Its function is as follows. Binds cAMP regulatory element DNA sequence. May play a role in RNA splicing. This chain is Luc7-like protein 3 (Luc7l3), found in Mus musculus (Mouse).